A 204-amino-acid polypeptide reads, in one-letter code: Imidazoleglycerol-phosphate dehydratase (204 aa).

Belongs to the imidazoleglycerol-phosphate dehydratase family.

It is found in the cytoplasm. It carries out the reaction D-erythro-1-(imidazol-4-yl)glycerol 3-phosphate = 3-(imidazol-4-yl)-2-oxopropyl phosphate + H2O. It functions in the pathway amino-acid biosynthesis; L-histidine biosynthesis; L-histidine from 5-phospho-alpha-D-ribose 1-diphosphate: step 6/9. This is Imidazoleglycerol-phosphate dehydratase from Rhodococcus jostii (strain RHA1).